The primary structure comprises 660 residues: GRIP and coiled-coil domain-containing protein 2 (660 aa).

Residues 1-28 form a disordered region; that stretch reads MSAPESSISPVPPPGSSSGGGKKLDSLP. 3 coiled-coil regions span residues 30–92, 115–464, and 517–596; these read EDLV…VENN, EWKE…KAIA, and DEYR…EYLK. In terms of domain architecture, GRIP spans 585–636; sequence ELSNEKNMEYLKNVFVQFLKPESVPAERDQLVIVLQRVLHLSPKEVEILKAA.

This Caenorhabditis elegans protein is GRIP and coiled-coil domain-containing protein 2.